A 162-amino-acid chain; its full sequence is Interleukin-2 (162 aa).

The signal sequence occupies residues 1 to 20; that stretch reads MYKIQLLSCIALTLALVANG. A glycan (O-linked (GalNAc...) threonine) is linked at Thr-23. An N-linked (GlcNAc...) asparagine glycan is attached at Asn-70. Cys-79 and Cys-134 form a disulfide bridge.

The protein belongs to the IL-2 family.

It localises to the secreted. In terms of biological role, cytokine produced by activated CD4-positive helper T-cells and to a lesser extend activated CD8-positive T-cells and natural killer (NK) cells that plays pivotal roles in the immune response and tolerance. Binds to a receptor complex composed of either the high-affinity trimeric IL-2R (IL2RA/CD25, IL2RB/CD122 and IL2RG/CD132) or the low-affinity dimeric IL-2R (IL2RB and IL2RG). Interaction with the receptor leads to oligomerization and conformation changes in the IL-2R subunits resulting in downstream signaling starting with phosphorylation of JAK1 and JAK3. In turn, JAK1 and JAK3 phosphorylate the receptor to form a docking site leading to the phosphorylation of several substrates including STAT5. This process leads to activation of several pathways including STAT, phosphoinositide-3-kinase/PI3K and mitogen-activated protein kinase/MAPK pathways. Functions as a T-cell growth factor and can increase NK-cell cytolytic activity as well. Promotes strong proliferation of activated B-cells and subsequently immunoglobulin production. Plays a pivotal role in regulating the adaptive immune system by controlling the survival and proliferation of regulatory T-cells, which are required for the maintenance of immune tolerance. Moreover, participates in the differentiation and homeostasis of effector T-cell subsets, including Th1, Th2, Th17 as well as memory CD8-positive T-cells. The chain is Interleukin-2 (IL2) from Cervus elaphus (Red deer).